A 497-amino-acid chain; its full sequence is 3-octaprenyl-4-hydroxybenzoate carboxy-lyase (497 aa).

Asparagine 172 contributes to the Mn(2+) binding site. Residues isoleucine 175–arginine 177, arginine 189–leucine 191, and arginine 194–glycine 195 each bind prenylated FMN. A Mn(2+)-binding site is contributed by glutamate 238. Aspartate 287 (proton donor) is an active-site residue.

The protein belongs to the UbiD family. As to quaternary structure, homohexamer. The cofactor is prenylated FMN. Mn(2+) serves as cofactor.

Its subcellular location is the cell membrane. It catalyses the reaction a 4-hydroxy-3-(all-trans-polyprenyl)benzoate + H(+) = a 2-(all-trans-polyprenyl)phenol + CO2. The protein operates within cofactor biosynthesis; ubiquinone biosynthesis. Its function is as follows. Catalyzes the decarboxylation of 3-octaprenyl-4-hydroxy benzoate to 2-octaprenylphenol, an intermediate step in ubiquinone biosynthesis. This chain is 3-octaprenyl-4-hydroxybenzoate carboxy-lyase, found in Enterobacter sp. (strain 638).